Here is a 278-residue protein sequence, read N- to C-terminus: Putative phosphoenolpyruvate synthase regulatory protein (278 aa).

158–165 lines the ADP pocket; the sequence is GVSRSGKT.

Belongs to the pyruvate, phosphate/water dikinase regulatory protein family. PSRP subfamily.

It catalyses the reaction [pyruvate, water dikinase] + ADP = [pyruvate, water dikinase]-phosphate + AMP + H(+). It carries out the reaction [pyruvate, water dikinase]-phosphate + phosphate + H(+) = [pyruvate, water dikinase] + diphosphate. In terms of biological role, bifunctional serine/threonine kinase and phosphorylase involved in the regulation of the phosphoenolpyruvate synthase (PEPS) by catalyzing its phosphorylation/dephosphorylation. This is Putative phosphoenolpyruvate synthase regulatory protein from Acinetobacter baumannii (strain AYE).